The following is a 327-amino-acid chain: Probable cell division protein WhiA (327 aa).

The segment at residues S275–K308 is a DNA-binding region (H-T-H motif).

It belongs to the WhiA family.

Functionally, involved in cell division and chromosome segregation. The polypeptide is Probable cell division protein WhiA (Mycobacterium bovis (strain ATCC BAA-935 / AF2122/97)).